Consider the following 292-residue polypeptide: DSC E3 ubiquitin ligase complex subunit 3 (292 aa).

At 1-243 (MSAEPLLPTH…PIANIKHNKD (243 aa)) the chain is on the extracellular side. N11, N41, N77, N99, and N145 each carry an N-linked (GlcNAc...) asparagine glycan. The chain crosses the membrane as a helical span at residues 244-264 (LLLGICVGFFFGVFGILLMKF). Residues 265–273 (DGLFNRRQK) lie on the Cytoplasmic side of the membrane. A helical membrane pass occupies residues 274-291 (MAIFAGVIVNVMFCLVRG). Residue F292 is a topological domain, extracellular.

This sequence belongs to the dsc3 family. As to quaternary structure, component of the DSC E3 ligase complexes composed of at least TUL1, DSC2, DSC3, UBX3, CDC48 as well as VLD1 for the vacuole-localized complex or GLD1 for the Golgi/endosome-localized complex.

It localises to the endoplasmic reticulum membrane. Component of the DSC E3 ubiquitin ligase complexes that tag proteins present in Golgi, endosome and vacuole membranes and function in protein homeostasis under non-stress conditions and support a role in protein quality control. Involved in endocytic protein trafficking. This is DSC E3 ubiquitin ligase complex subunit 3 from Saccharomyces cerevisiae (strain ATCC 204508 / S288c) (Baker's yeast).